The sequence spans 390 residues: Digeranylgeranylglycerophospholipid reductase (390 aa).

Residues A18, E37, C48, A49, A51, R98, V122, D278, G290, and I291 each coordinate FAD. V368 is an a 2,3-bis-O-(geranylgeranyl)-sn-glycerol 1-phospholipid binding site.

The protein belongs to the geranylgeranyl reductase family. DGGGPL reductase subfamily. It depends on FAD as a cofactor.

It carries out the reaction a 2,3-bis-O-phytanyl-sn-glycerol 1-phospholipid + 8 A = a 2,3-bis-O-(geranylgeranyl)-sn-glycerol 1-phospholipid + 8 AH2. The catalysed reaction is 2,3-bis-O-(phytanyl)-sn-glycerol 1-phosphate + 8 A = 2,3-bis-O-(geranylgeranyl)-sn-glycerol 1-phosphate + 8 AH2. It catalyses the reaction CDP-2,3-bis-O-(geranylgeranyl)-sn-glycerol + 8 AH2 = CDP-2,3-bis-O-(phytanyl)-sn-glycerol + 8 A. The enzyme catalyses archaetidylserine + 8 AH2 = 2,3-bis-O-phytanyl-sn-glycero-3-phospho-L-serine + 8 A. It functions in the pathway membrane lipid metabolism; glycerophospholipid metabolism. In terms of biological role, is involved in the reduction of 2,3-digeranylgeranylglycerophospholipids (unsaturated archaeols) into 2,3-diphytanylglycerophospholipids (saturated archaeols) in the biosynthesis of archaeal membrane lipids. Catalyzes the formation of archaetidic acid (2,3-di-O-phytanyl-sn-glyceryl phosphate) from 2,3-di-O-geranylgeranylglyceryl phosphate (DGGGP) via the hydrogenation of each double bond of the isoprenoid chains. Is also probably able to reduce double bonds of geranyl groups in CDP-2,3-bis-O-(geranylgeranyl)-sn-glycerol and archaetidylserine, thus acting at various stages in the biosynthesis of archaeal membrane lipids. This Methanococcus vannielii (strain ATCC 35089 / DSM 1224 / JCM 13029 / OCM 148 / SB) protein is Digeranylgeranylglycerophospholipid reductase.